The chain runs to 301 residues: Tail tube protein (301 aa).

This sequence belongs to the skunalikevirus tail tube protein family. Homohexamer. Interacts with the tail terminator protein.

Its subcellular location is the virion. Forms the cylindrical rigid tail tube with a 4 nm wide central channel for DNA ejection. The tube is composed of 31 hexameric rings. In Lactococcus phage p2 (Lactococcus lactis bacteriophage p2), this protein is Tail tube protein.